The chain runs to 291 residues: Ubiquinone biosynthesis protein COQ4, mitochondrial (291 aa).

A mitochondrion-targeting transit peptide spans 1 to 37 (MLGRRSVSLLRGLTELPVSSRAHTALRALSVPQTRRN). Zn(2+)-binding residues include His-169, Asp-170, His-173, and Glu-185. The span at 271–283 (PLNEAKEAAERRS) shows a compositional bias: basic and acidic residues. The interval 271–291 (PLNEAKEAAERRSKTTQNQIY) is disordered.

The protein belongs to the COQ4 family. As to quaternary structure, component of a multi-subunit COQ enzyme complex, composed of at least COQ3, COQ4, COQ5, COQ6, COQ7 and COQ9. Zn(2+) is required as a cofactor.

It localises to the mitochondrion inner membrane. It catalyses the reaction a 4-hydroxy-3-methoxy-5-(all-trans-polyprenyl)benzoate + H(+) = a 2-methoxy-6-(all-trans-polyprenyl)phenol + CO2. Its pathway is cofactor biosynthesis; ubiquinone biosynthesis. Functionally, lyase that catalyzes the C1-decarboxylation of 4-hydroxy-3-methoxy-5-(all-trans-polyprenyl)benzoic acid into 2-methoxy-6-(all-trans-polyprenyl)phenol during ubiquinone biosynthesis. The protein is Ubiquinone biosynthesis protein COQ4, mitochondrial of Coprinopsis cinerea (strain Okayama-7 / 130 / ATCC MYA-4618 / FGSC 9003) (Inky cap fungus).